The chain runs to 416 residues: Gamma-glutamyl phosphate reductase (416 aa).

Belongs to the gamma-glutamyl phosphate reductase family.

It is found in the cytoplasm. It carries out the reaction L-glutamate 5-semialdehyde + phosphate + NADP(+) = L-glutamyl 5-phosphate + NADPH + H(+). The protein operates within amino-acid biosynthesis; L-proline biosynthesis; L-glutamate 5-semialdehyde from L-glutamate: step 2/2. In terms of biological role, catalyzes the NADPH-dependent reduction of L-glutamate 5-phosphate into L-glutamate 5-semialdehyde and phosphate. The product spontaneously undergoes cyclization to form 1-pyrroline-5-carboxylate. The chain is Gamma-glutamyl phosphate reductase from Petrotoga mobilis (strain DSM 10674 / SJ95).